Here is an 84-residue protein sequence, read N- to C-terminus: Three-finger toxin 3FTx-1 (84 aa).

The first 21 residues, 1–21 (MKTLLLTLVVVTIVCLDLGNS), serve as a signal peptide directing secretion. Disulfide bonds link C24/C41, C34/C59, C63/C71, and C72/C77. N-linked (GlcNAc...) asparagine glycosylation is present at N78.

The protein belongs to the three-finger toxin family. Short-chain subfamily. As to expression, expressed by the venom gland.

The protein localises to the secreted. The protein is Three-finger toxin 3FTx-1 of Micrurus corallinus (Brazilian coral snake).